We begin with the raw amino-acid sequence, 154 residues long: SsrA-binding protein (154 aa).

The protein belongs to the SmpB family.

It is found in the cytoplasm. Its function is as follows. Required for rescue of stalled ribosomes mediated by trans-translation. Binds to transfer-messenger RNA (tmRNA), required for stable association of tmRNA with ribosomes. tmRNA and SmpB together mimic tRNA shape, replacing the anticodon stem-loop with SmpB. tmRNA is encoded by the ssrA gene; the 2 termini fold to resemble tRNA(Ala) and it encodes a 'tag peptide', a short internal open reading frame. During trans-translation Ala-aminoacylated tmRNA acts like a tRNA, entering the A-site of stalled ribosomes, displacing the stalled mRNA. The ribosome then switches to translate the ORF on the tmRNA; the nascent peptide is terminated with the 'tag peptide' encoded by the tmRNA and targeted for degradation. The ribosome is freed to recommence translation, which seems to be the essential function of trans-translation. This Solidesulfovibrio magneticus (strain ATCC 700980 / DSM 13731 / RS-1) (Desulfovibrio magneticus) protein is SsrA-binding protein.